Reading from the N-terminus, the 93-residue chain is Cell division topological specificity factor (93 aa).

It belongs to the MinE family.

In terms of biological role, prevents the cell division inhibition by proteins MinC and MinD at internal division sites while permitting inhibition at polar sites. This ensures cell division at the proper site by restricting the formation of a division septum at the midpoint of the long axis of the cell. This chain is Cell division topological specificity factor, found in Synechococcus sp. (strain WH7803).